Consider the following 382-residue polypeptide: Gap junction alpha-1 protein (382 aa).

Over 2–23 the chain is Cytoplasmic; sequence GDWSALGKLLDKVQAYSTAGGK. S5 bears the Phosphoserine mark. Residues 24-44 traverse the membrane as a helical segment; that stretch reads VWLSVLFIFRILLLGTAVESA. At 45 to 76 the chain is on the extracellular side; it reads WGDEQSAFRCNTQQPGCENVCYDKSFPISHVR. Intrachain disulfides connect C54/C192 and C187/C198. The chain crosses the membrane as a helical span at residues 77 to 97; that stretch reads FWVLQIIFVSVPTLLYLAHVF. The Cytoplasmic segment spans residues 98–155; sequence YVMRKEEKLNKKEEELKVAQTDGVNVEMHLKQIEIKKFKYGIEEHGKVKMRGGLLRTY. A Glycyl lysine isopeptide (Lys-Gly) (interchain with G-Cter in SUMO) cross-link involves residue K144. Residues 156-176 traverse the membrane as a helical segment; the sequence is IISILFKSVFEVAFLLIQWYI. Residues 177–207 lie on the Extracellular side of the membrane; the sequence is YGFSLSAVYTCKRDPCPHQVDCFLSRPTEKT. A helical membrane pass occupies residues 208-228; sequence IFIIFMLVVSLVSLALNIIEL. Residues 229-382 are Cytoplasmic-facing; it reads FYVFFKGVKD…SRPRPDDLEI (154 aa). K237 participates in a covalent cross-link: Glycyl lysine isopeptide (Lys-Gly) (interchain with G-Cter in SUMO). The interaction with NOV stretch occupies residues 244–382; that stretch reads SDPYHATTGP…SRPRPDDLEI (139 aa). At Y247 the chain carries Phosphotyrosine. Residues S255, S257, and S262 each carry the phosphoserine modification. The tract at residues 264 to 382 is interaction with UBQLN4; the sequence is KYAYFNGCSS…SRPRPDDLEI (119 aa). C271 carries the post-translational modification S-nitrosocysteine. At T275 the chain carries Phosphothreonine. Phosphoserine is present on residues S306 and S314. A compositionally biased stretch (polar residues) spans 317–332; sequence QNRMGQAGSTISNSHA. Positions 317 to 382 are disordered; sequence QNRMGQAGST…SRPRPDDLEI (66 aa). A Phosphoserine; by CK1 modification is found at S325. Position 326 is a phosphothreonine (T326). A phosphoserine; by CK1 mark is found at S328 and S330. Phosphoserine occurs at positions 344 and 365. Residues 362-374 show a composition bias toward low complexity; sequence RPSSRASSRASSR. S368 is subject to Phosphoserine; by PKC/PRKCG and PKC/PRKCD. Residues S369 and S373 each carry the phosphoserine modification.

Belongs to the connexin family. Alpha-type (group II) subfamily. A connexon is composed of a hexamer of connexins. Interacts with SGSM3. Interacts with RIC1/CIP150. Interacts with CNST and CSNK1D. Interacts (via C-terminus) with TJP1. Interacts (via C-terminus) with SRC (via SH3 domain). Interacts (not ubiquitinated) with UBQLN4 (via UBA domain). Interacts with NOV. Interacts with TMEM65. Interacts with ANK3/ANKG and PKP2. In terms of processing, phosphorylation at Ser-325, Ser-328 and Ser-330 by CK1 modulates gap junction assembly. Phosphorylated at Ser-368 by PRKCG; phosphorylation induces disassembly of gap junction plaques and inhibition of gap junction activity. Phosphorylation at Ser-368 by PRKCD triggers its internalization into small vesicles leading to proteasome-mediated degradation. Post-translationally, sumoylated with SUMO1, SUMO2 and SUMO3, which may regulate the level of functional Cx43 gap junctions at the plasma membrane. May be desumoylated by SENP1 or SENP2. S-nitrosylation at Cys-271 is enriched at the muscle endothelial gap junction in arteries, it augments channel permeability and may regulate of smooth muscle cell to endothelial cell communication. In terms of processing, acetylated in the developing cortex; leading to delocalization from the cell membrane.

Its subcellular location is the cell membrane. It localises to the cell junction. The protein resides in the gap junction. It is found in the endoplasmic reticulum. Functionally, gap junction protein that acts as a regulator of bladder capacity. A gap junction consists of a cluster of closely packed pairs of transmembrane channels, the connexons, through which materials of low MW diffuse from one cell to a neighboring cell. May play a critical role in the physiology of hearing by participating in the recycling of potassium to the cochlear endolymph. Negative regulator of bladder functional capacity: acts by enhancing intercellular electrical and chemical transmission, thus sensitizing bladder muscles to cholinergic neural stimuli and causing them to contract. May play a role in cell growth inhibition through the regulation of NOV expression and localization. Plays an essential role in gap junction communication in the ventricles. The chain is Gap junction alpha-1 protein (GJA1) from Ursus americanus (American black bear).